The following is a 607-amino-acid chain: Chaperone protein dnaK (607 aa).

Residues 579 to 591 (KASETSNAKTNGK) are compositionally biased toward polar residues. A disordered region spans residues 579–607 (KASETSNAKTNGKASEKEDVIDADFKAQE). Positions 592 to 607 (ASEKEDVIDADFKAQE) are enriched in basic and acidic residues.

It belongs to the heat shock protein 70 family.

The protein resides in the plastid. The protein localises to the chloroplast. Functionally, acts as a chaperone. The polypeptide is Chaperone protein dnaK (Cyanidioschyzon merolae (strain NIES-3377 / 10D) (Unicellular red alga)).